Reading from the N-terminus, the 41-residue chain is Large ribosomal subunit protein bL36 (41 aa).

It belongs to the bacterial ribosomal protein bL36 family.

The protein is Large ribosomal subunit protein bL36 of Azorhizobium caulinodans (strain ATCC 43989 / DSM 5975 / JCM 20966 / LMG 6465 / NBRC 14845 / NCIMB 13405 / ORS 571).